Reading from the N-terminus, the 333-residue chain is L-lactate dehydrogenase B chain (333 aa).

NAD(+)-binding positions include 29–57 and R99; that span reads GQVG…IEDK. Substrate-binding residues include R106, N138, and R169. N138 serves as a coordination point for NAD(+). Catalysis depends on H193, which acts as the Proton acceptor. T248 contributes to the substrate binding site.

This sequence belongs to the LDH/MDH superfamily. LDH family. As to quaternary structure, homotetramer.

It is found in the cytoplasm. The catalysed reaction is (S)-lactate + NAD(+) = pyruvate + NADH + H(+). Its pathway is fermentation; pyruvate fermentation to lactate; (S)-lactate from pyruvate: step 1/1. Its function is as follows. Interconverts simultaneously and stereospecifically pyruvate and lactate with concomitant interconversion of NADH and NAD(+). In Anguilla rostrata (American eel), this protein is L-lactate dehydrogenase B chain (ldhb).